We begin with the raw amino-acid sequence, 203 residues long: Urease accessory protein UreG (203 aa).

12–19 contacts GTP; sequence GPVGSGKT.

This sequence belongs to the SIMIBI class G3E GTPase family. UreG subfamily. Homodimer. UreD, UreF and UreG form a complex that acts as a GTP-hydrolysis-dependent molecular chaperone, activating the urease apoprotein by helping to assemble the nickel containing metallocenter of UreC. The UreE protein probably delivers the nickel.

Its subcellular location is the cytoplasm. Functionally, facilitates the functional incorporation of the urease nickel metallocenter. This process requires GTP hydrolysis, probably effectuated by UreG. The polypeptide is Urease accessory protein UreG (Nitrosococcus oceani (strain ATCC 19707 / BCRC 17464 / JCM 30415 / NCIMB 11848 / C-107)).